The chain runs to 62 residues: Large ribosomal subunit protein bL28 (62 aa).

It belongs to the bacterial ribosomal protein bL28 family.

This is Large ribosomal subunit protein bL28 from Thermoanaerobacter sp. (strain X514).